The primary structure comprises 223 residues: Small ribosomal subunit protein uS3 (223 aa).

The region spanning 38-106 (LKAELKEKLK…EVYIDIQEVH (69 aa)) is the KH type-2 domain.

The protein belongs to the universal ribosomal protein uS3 family. In terms of assembly, part of the 30S ribosomal subunit. Forms a tight complex with proteins S10 and S14.

Binds the lower part of the 30S subunit head. Binds mRNA in the 70S ribosome, positioning it for translation. The sequence is that of Small ribosomal subunit protein uS3 from Koribacter versatilis (strain Ellin345).